Consider the following 509-residue polypeptide: Probable aspartic-type endopeptidase CTSD (509 aa).

The N-terminal stretch at 1 to 21 (MQFLWLCLLSAVTLQFTGTLA) is a signal peptide. In terms of domain architecture, Peptidase A1 spans 102–408 (YFSEVKVGSE…DFDKNRVGLA (307 aa)). Asp-120 is a catalytic residue. Asn-174 carries N-linked (GlcNAc...) asparagine glycosylation. The active site involves Asp-302. Asn-361 carries N-linked (GlcNAc...) asparagine glycosylation. The segment at 451-489 (NKAPSGGSPGLPAESGSDSTTNGEATNGATSSPNSSSSV) is disordered. Residues 466–480 (GSDSTTNGEATNGAT) show a composition bias toward polar residues. Asn-484 carries an N-linked (GlcNAc...) asparagine glycan. Ser-485 is lipidated: GPI-anchor amidated serine. The propeptide at 486 to 509 (SSSVLTPTWLTLAVFFAIGSSLWS) is removed in mature form.

This sequence belongs to the peptidase A1 family.

The protein resides in the cell membrane. In terms of biological role, probable GPI-anchored aspartic-type endopeptidase which contributes to virulence. This chain is Probable aspartic-type endopeptidase CTSD (CTSD), found in Trichophyton verrucosum (strain HKI 0517).